A 375-amino-acid chain; its full sequence is Queuine tRNA-ribosyltransferase (375 aa).

Catalysis depends on Asp-89, which acts as the Proton acceptor. Substrate contacts are provided by residues Asp-89 to Phe-93, Asp-143, Gln-187, and Gly-214. The RNA binding stretch occupies residues Gly-245 to Asp-251. Asp-264 (nucleophile) is an active-site residue. The segment at Thr-269 to Arg-273 is RNA binding; important for wobble base 34 recognition. Cys-302, Cys-304, Cys-307, and His-333 together coordinate Zn(2+).

The protein belongs to the queuine tRNA-ribosyltransferase family. In terms of assembly, homodimer. Within each dimer, one monomer is responsible for RNA recognition and catalysis, while the other monomer binds to the replacement base PreQ1. Zn(2+) serves as cofactor.

The catalysed reaction is 7-aminomethyl-7-carbaguanine + guanosine(34) in tRNA = 7-aminomethyl-7-carbaguanosine(34) in tRNA + guanine. Its pathway is tRNA modification; tRNA-queuosine biosynthesis. Its function is as follows. Catalyzes the base-exchange of a guanine (G) residue with the queuine precursor 7-aminomethyl-7-deazaguanine (PreQ1) at position 34 (anticodon wobble position) in tRNAs with GU(N) anticodons (tRNA-Asp, -Asn, -His and -Tyr). Catalysis occurs through a double-displacement mechanism. The nucleophile active site attacks the C1' of nucleotide 34 to detach the guanine base from the RNA, forming a covalent enzyme-RNA intermediate. The proton acceptor active site deprotonates the incoming PreQ1, allowing a nucleophilic attack on the C1' of the ribose to form the product. After dissociation, two additional enzymatic reactions on the tRNA convert PreQ1 to queuine (Q), resulting in the hypermodified nucleoside queuosine (7-(((4,5-cis-dihydroxy-2-cyclopenten-1-yl)amino)methyl)-7-deazaguanosine). The sequence is that of Queuine tRNA-ribosyltransferase from Salmonella arizonae (strain ATCC BAA-731 / CDC346-86 / RSK2980).